Reading from the N-terminus, the 175-residue chain is Adenylate kinase isoenzyme 6 homolog (175 aa).

Residues Gly-17, Gly-19, Lys-20, Thr-21, and Ser-22 each contribute to the ATP site. An NMPbind region spans residues 37–60 (DISSAVKEKELHDGWDSEFQCYIL). Positions 112–122 (KRNYNQHKITN) are LID. Residue Arg-113 coordinates ATP.

It belongs to the adenylate kinase family. AK6 subfamily. As to quaternary structure, monomer and homodimer. Interacts with small ribosomal subunit protein uS11. Not a structural component of 43S pre-ribosomes, but transiently interacts with them by binding to uS11.

It is found in the cytoplasm. Its subcellular location is the nucleus. It catalyses the reaction AMP + ATP = 2 ADP. It carries out the reaction ATP + H2O = ADP + phosphate + H(+). In terms of biological role, broad-specificity nucleoside monophosphate (NMP) kinase that catalyzes the reversible transfer of the terminal phosphate group between nucleoside triphosphates and monophosphates. Also has ATPase activity. Involved in the late cytoplasmic maturation steps of the 40S ribosomal particles, specifically 18S rRNA maturation. While NMP activity is not required for ribosome maturation, ATPase activity is. Associates transiently with small ribosomal subunit protein uS11. ATP hydrolysis breaks the interaction with uS11. May temporarily remove uS11 from the ribosome to enable a conformational change of the ribosomal RNA that is needed for the final maturation step of the small ribosomal subunit. Its NMP activity may have a role in nuclear energy homeostasis. The chain is Adenylate kinase isoenzyme 6 homolog from Dictyostelium discoideum (Social amoeba).